A 107-amino-acid polypeptide reads, in one-letter code: Insulin-like peptide 6 (107 aa).

A signal peptide spans 1–33; sequence MVLKVPTSKVLLVLATLFAVAAMISSWMPQVAA. 3 disulfides stabilise this stretch: C48-C91, C60-C105, and C90-C96. Residues 67 to 76 constitute a propeptide, connecting peptide; sequence LGDVFPNSFG.

It belongs to the insulin family. Heterodimer of a B chain and an A chain linked by two disulfide bonds. As to expression, expressed at a low level in the larval gut.

The protein localises to the secreted. Its function is as follows. Possible ligand of InR/insulin-like receptor. This chain is Insulin-like peptide 6, found in Drosophila melanogaster (Fruit fly).